A 363-amino-acid chain; its full sequence is tRNA/tmRNA (uracil-C(5))-methyltransferase (363 aa).

5 residues coordinate S-adenosyl-L-methionine: Q187, Y215, N220, E236, and D296. The active-site Nucleophile is C321. E355 functions as the Proton acceptor in the catalytic mechanism.

This sequence belongs to the class I-like SAM-binding methyltransferase superfamily. RNA M5U methyltransferase family. TrmA subfamily.

It carries out the reaction uridine(54) in tRNA + S-adenosyl-L-methionine = 5-methyluridine(54) in tRNA + S-adenosyl-L-homocysteine + H(+). It catalyses the reaction uridine(341) in tmRNA + S-adenosyl-L-methionine = 5-methyluridine(341) in tmRNA + S-adenosyl-L-homocysteine + H(+). Its function is as follows. Dual-specificity methyltransferase that catalyzes the formation of 5-methyluridine at position 54 (m5U54) in all tRNAs, and that of position 341 (m5U341) in tmRNA (transfer-mRNA). This chain is tRNA/tmRNA (uracil-C(5))-methyltransferase, found in Pseudomonas aeruginosa (strain UCBPP-PA14).